The sequence spans 130 residues: Methylglyoxal synthase (130 aa).

An MGS-like domain is found at 1-130 (MSKPRIALIA…DLARNMQDVC (130 aa)). Substrate-binding positions include His-11, Lys-15, 37–40 (TGTT), and 57–58 (SG). Asp-63 acts as the Proton donor/acceptor in catalysis. Substrate is bound at residue His-90.

The protein belongs to the methylglyoxal synthase family.

The catalysed reaction is dihydroxyacetone phosphate = methylglyoxal + phosphate. In terms of biological role, catalyzes the formation of methylglyoxal from dihydroxyacetone phosphate. This chain is Methylglyoxal synthase, found in Burkholderia lata (strain ATCC 17760 / DSM 23089 / LMG 22485 / NCIMB 9086 / R18194 / 383).